Reading from the N-terminus, the 88-residue chain is UPF0250 protein Shal_3239 (88 aa).

Belongs to the UPF0250 family.

The chain is UPF0250 protein Shal_3239 from Shewanella halifaxensis (strain HAW-EB4).